Here is a 343-residue protein sequence, read N- to C-terminus: Nuclear hormone receptor family member nhr-167 (343 aa).

Residues 5 to 81 (HQKCAVCGRF…VGMTLPSYLL (77 aa)) constitute a DNA-binding region (nuclear receptor). NR C4-type zinc fingers lie at residues 8–28 (CAVC…CNSC) and 45–64 (CFRG…CTSC). Positions 101 to 339 (THNKRMDSLF…KKLVKDGIEA (239 aa)) constitute an NR LBD domain.

The protein belongs to the nuclear hormone receptor family.

The protein localises to the nucleus. Functionally, orphan nuclear receptor. The protein is Nuclear hormone receptor family member nhr-167 (nhr-167) of Caenorhabditis elegans.